A 153-amino-acid polypeptide reads, in one-letter code: 3-hydroxyacyl-[acyl-carrier-protein] dehydratase FabZ (153 aa).

H53 is a catalytic residue.

This sequence belongs to the thioester dehydratase family. FabZ subfamily.

It is found in the cytoplasm. It carries out the reaction a (3R)-hydroxyacyl-[ACP] = a (2E)-enoyl-[ACP] + H2O. Involved in unsaturated fatty acids biosynthesis. Catalyzes the dehydration of short chain beta-hydroxyacyl-ACPs and long chain saturated and unsaturated beta-hydroxyacyl-ACPs. This chain is 3-hydroxyacyl-[acyl-carrier-protein] dehydratase FabZ, found in Lawsonia intracellularis (strain PHE/MN1-00).